The chain runs to 232 residues: Small ribosomal subunit protein uS3 (232 aa).

The KH type-2 domain occupies 39-107 (IRAILHKELK…DVVINIVEIR (69 aa)).

Belongs to the universal ribosomal protein uS3 family. Part of the 30S ribosomal subunit. Forms a tight complex with proteins S10 and S14.

Functionally, binds the lower part of the 30S subunit head. Binds mRNA in the 70S ribosome, positioning it for translation. The chain is Small ribosomal subunit protein uS3 from Rhodopseudomonas palustris (strain BisA53).